A 2543-amino-acid polypeptide reads, in one-letter code: MLNTEDILCKMLFAQLQSIGFFTESKSQPVLENFYGRWFEESQSILERHQFLKRTENGHVPTRSIGTMSELWKEWNEQKFDLLQDNNMKAMVTLVETALKALPEILTGKASATDILFPNSSMDLVEGVYKNNQVADYFNDVLADTLTAYLQERLKQEPEAKIRILEIGAGTGGTSAAVFQKLKAWQTHIKEYCYTDLSKAFLMHAENKYGPDNPYLTYKRFNVEEPASEQHIDAGGYDAVIAANVLHATKNIRQTLRNAKAVLKKNGLLLLNEISNHNIYSHLTFGLLEGWWLYEDPDLRIPGCPGLYPDTWKMVLESEGFRYVSFMAEQSHQLGQQIIAAESNGVVRQKKRTEAEEDPSHIQMNAEIDHSQESDSLIEQTAQFVKHTLAKSIKLSPERIHEDTTFEKYGIDSILQVNFIRELEKVTGELPKTILFEHNNTKELVEYLVKGHENKLRTALLKEKTKPAKNEAPLQTERTDPNKPFTFHTRRFVTEQEVTETQLANTEPLKIEKTSNLQGTHFNDSSTEDIAIIGVSGRYPMSNSLEELWGHLIAGDNCITEAPESRWRTSLLKTLSKDPKKPANKKRYGGFLQDIEAFDHQLFEVEQNRVMEMTPELRLCLETVWETFEDGGYTRTRLDKLRDDDGVGVFIGNMYNQYFWNIPSLEQAVLSSNGGDWHIANRVSHFFNLTGPSIAVSSACSSSLNAIHLACESLKLKNCSMAIAGGVNLTLDLSKYDSLERANLLGSGNQSKSFGTGNGLIPGEGVGAVLLKPLSKAMEDQDHIYAVIKSSFANHSGGRQMYTAPDPKQQAKLIVKSIQQSGIDPETIGYIESAANGSALGDPIEVIALTNAFQQYTNKKQFCAIGSVKSNLGHLEAASGISQLTKVLLQMKKGTLVPTINAMPVNPNIKLEHTAFYLQEQTEPWHRLNDPETGKQLPRRSMINSFGAGGAYANLIIEEYMETAPEKEHIAPRQQEFTAVFSAKTKWSLLSYLENMQLFLEKEASLDIEPVVQALHRRNHNLEHRTAFTVASTQELIEKLKVFRTSRESSLQQGIYTSFDLQPCAESASRDREINAAEQWAQGALIAFKEADIGNRTGWVHLPHYAFDHNTSFHFDVSSINEKSSDVEDNINQPVIQDQFTYDEPYVQGHVFNNERVLVGATYGSLAIEAFFNLFPEENSGRISKLSYISPIVIKQGETIELQAKPLQKDQVIELQIMYREPSSGLWKPAAIGQCGIGSFEPKKVNIENVKHSLTKLHHIDQMYKTGNGPEWGELFKTITHLYRDHKSILAKIRLPQSGLANGHHYTVSPLMTNSAYLAILSFLEQFDMTGGFLPFGINDIQFTKQTIKGDCWLLITLVKNTGDMLLFDVDVINESSETVLHYSGYSLKQLRISNQRGNQNKAIKASNLKARIRSYVTDKLAVNMADPSKLSIAKAHIMDFGIDSSQLVALTREMEAETKIELNPTLFFEYPTIQELIDFFADKHEASFAQLFGEAHQQEERPAQIENQMKQIPAYETNTDKTIEHAADGIAIIGMSGQFPKANSVTEFWDNLVQGKNCVSEVPKERWDWRKYAAADKEGQSSLQWGGFIEGIGEFDPLFFGISPKEAANMDPQEFLLLIHAWKAMEDAGLTGQVLSSRPTGVFVAAGNTDTAVVPSLIPNRISYALDVKGPSEYYEAACSSALVALHRAIQSIRNGECEQAIVGAVNLLLSPKGFIGFDSMGYLSEKGQAKSFQADANGFVRSEGAGVLIIKPLQKAIEDSDHIYSVIKGSGVSHGGRGMSLHAPNPAGMKDAMLKAYQGAQIDPKTVTYIEAHGIASPLADAIEIEALKSGCSQLELELPQEVREEAPCYISSLKPSIGHGELVSGMAALMKVSMAMKHQTIPGISGFSSLNDQVSLKGTRFRVTAENQQWRDLSDDAGKKIPRRASINSYSFGGVNAHVILEEYIPLPKPPVSMSENGAHIVVLSAKNQDRLKAIAQQQLDYVNKQQELSLQDYAYTLQTGREEMEDRLALVVRSKEELVIGLQACLAEKGDKLKSSVPVFSGNAENGSSDLEALLDGPLREMVIETLLSENNLEKIAFCWTKGVQIPWEKLYQGKGARRIPLPTYPFEKRSCWNGFQAVENTPSVSQDERINNSSDHHILANVLGMAPDELQFHKPLQQYGFDSISCIQLLQQLQSKVDPLIVLTELQACHTVQDMMDLIAKKQEDTSLQNDQARTFPELIPLNDGKRGRPVFWFHGGVGGVEIYQQFAQKSQRPFYGIQARGFMTDSAPLHGIEQMASYYIEIIRSIQPEGPYDVGGYSLGGMIAYEVTRQLQSQGLAVKSMVMIDSPYRSETKENEASMKTSMLQTINTMLASIAKREKFTDVLISREEVDISLEDEEFLSELIDLAKERGLNKPDKQIRAQAQQMMKTQRAYDLESYTVKPLPDPETVKCYYFRNKSRSFFGDLDTYFTLSNEKEPFDQAAYWEEWERQIPHFHLVDVDSSNHFMILTEPKASTALLEFCEKLYSNRGVVNANFLKAFRKKHEAREEKETDELVKR.

A methyltransferase region spans residues 165–269; the sequence is LEIGAGTGGT…KAVLKKNGLL (105 aa). Residues 376–452 enclose the Carrier 1 domain; it reads SLIEQTAQFV…ELVEYLVKGH (77 aa). Serine 413 carries the post-translational modification O-(pantetheine 4'-phosphoryl)serine. Positions 465–485 are disordered; the sequence is TKPAKNEAPLQTERTDPNKPF. One can recognise a Ketosynthase family 3 (KS3) 1 domain in the interval 527-959; it reads TEDIAIIGVS…GAYANLIIEE (433 aa). Residue cysteine 700 is the For beta-ketoacyl synthase 1 activity of the active site. The tract at residues 1114–1242 is N-terminal hotdog fold; it reads HFDVSSINEK…GQCGIGSFEP (129 aa). Residues 1114–1397 form the PKS/mFAS DH domain; sequence HFDVSSINEK…LKQLRISNQR (284 aa). Positions 1255–1397 are C-terminal hotdog fold; it reads TKLHHIDQMY…LKQLRISNQR (143 aa). Positions 1407 to 1485 constitute a Carrier 2 domain; that stretch reads SNLKARIRSY…ELIDFFADKH (79 aa). Position 1445 is an O-(pantetheine 4'-phosphoryl)serine (serine 1445). Residues 1528-1946 enclose the Ketosynthase family 3 (KS3) 2 domain; that stretch reads ADGIAIIGMS…GVNAHVILEE (419 aa). Active-site for beta-ketoacyl synthase 2 activity residues include cysteine 1680, histidine 1815, and histidine 1862. The region spanning 2134-2208 is the Carrier 3 domain; the sequence is RINNSSDHHI…DMMDLIAKKQ (75 aa). At serine 2168 the chain carries O-(pantetheine 4'-phosphoryl)serine. Residues 2234–2514 are thioesterase; that stretch reads RPVFWFHGGV…EFCEKLYSNR (281 aa).

It depends on pantetheine 4'-phosphate as a cofactor.

Its subcellular location is the cytoplasm. Its pathway is antibiotic biosynthesis; bacillaene biosynthesis. Functionally, involved in some intermediate steps for the synthesis of the antibiotic polyketide bacillaene which is involved in secondary metabolism. In Bacillus subtilis (strain 168), this protein is Polyketide synthase PksR (pksR).